Reading from the N-terminus, the 180-residue chain is Small ribosomal subunit protein eS10y (180 aa).

A disordered region spans residues 92-180 (LKKQQKPLGR…GGGAAGSDLP (89 aa)). A compositionally biased stretch (basic and acidic residues) spans 108–128 (DRPRGPPRGDGERRFGDRDGY). A compositionally biased stretch (gly residues) spans 152-180 (FRGGAGGARQGFGRGAGGFGGGAAGSDLP).

This sequence belongs to the eukaryotic ribosomal protein eS10 family.

It localises to the cytoplasm. This is Small ribosomal subunit protein eS10y (RPS10B) from Arabidopsis thaliana (Mouse-ear cress).